The chain runs to 30 residues: Conotoxin Bt12.1 (30 aa).

Contains 3 disulfide bonds. In terms of tissue distribution, expressed by the venom duct.

The protein localises to the secreted. The protein is Conotoxin Bt12.1 of Conus betulinus (Beech cone).